Consider the following 2374-residue polypeptide: Genome polyprotein (2374 aa).

The N-myristoyl glycine; by host moiety is linked to residue Gly-115. Disordered regions lie at residues 144-176 and 707-739; these read GDMP…GNVV and GADG…FDYP. Residues 157–174 show a composition bias toward low complexity; that stretch reads GSNKGGSSTSPKSTSNGN. The span at 716-728 shows a compositional bias: polar residues; it reads APTSDLSDGNPTT. Residues 1361–1525 form the SF3 helicase domain; that stretch reads YSTALSAISL…VAFSAAAALQ (165 aa). 1387–1394 lines the ATP pocket; the sequence is GPPGTGKS. Gly-1600 carries N-myristoyl glycine; by host lipidation. Residues 1649–1669 form a helical membrane-spanning segment; that stretch reads IFAASSFLSLIAATLTIVRCL. The segment at 1677–1699 is disordered; the sequence is GAYSGTPVPKPRKKDLPKQPVYS. At Tyr-1679 the chain carries O-(5'-phospho-RNA)-tyrosine. In terms of domain architecture, Peptidase C3 spans 1700-1889; it reads GPVRRQGFDP…FSARLTPERV (190 aa). Active-site for protease 3C activity residues include His-1748, Glu-1779, and Cys-1852. The RdRp catalytic domain occupies 2126-2243; the sequence is SNVWSIDYSC…GSNQDFHPRE (118 aa). Residues Asp-2132 and Asp-2229 each act as for RdRp activity in the active site.

Interacts with capsid protein VP1. Interacts with capsid protein VP3. In terms of assembly, interacts with capsid protein VP0. Interacts with capsid protein VP3. As to quaternary structure, interacts with capsid protein VP0. Interacts with capsid protein VP1. Homodimer. Interacts with protein 2B. Interacts with protein 2C. In terms of assembly, homodimer. Interacts with host ABCD3. Interacts with protein 2A. Interacts with host ACBD3. As to quaternary structure, homodimer. Interacts with host ABCD3. Interacts with protein 2A. Interacts with protein 3A. Interacts with protein 3C. Interacts with host ACBD3. Homodimer. Interacts with host ABCD3 (via GOLD domain) and PI4KB; these interactions allow the formation of a viral protein/ACBD3/PI4KB complex in order to synthesize PI4P at the viral RNA replication sites. Interacts with protein 2C. Interacts with protein 3C. Protein 3C: Interacts with protein 2A. Protein 3C: Interacts with protein 2C. In terms of processing, specific enzymatic cleavages by the viral protease in vivo yield a variety of precursors and mature proteins. The leader protein-VP0 junction is cleaved by 3C proteinase. The VP1/2A junction is cleaved by the protein 3CD in association with protein 2A. Uridylylated by the polymerase and is covalently linked to the 5'-end of genomic RNA. This uridylylated form acts as a nucleotide-peptide primer for the polymerase.

The protein localises to the virion. It is found in the host cytoplasm. It localises to the host cytoplasmic vesicle membrane. The protein resides in the host Golgi apparatus membrane. It catalyses the reaction Selective cleavage of Gln-|-Gly bond in the poliovirus polyprotein. In other picornavirus reactions Glu may be substituted for Gln, and Ser or Thr for Gly.. The catalysed reaction is RNA(n) + a ribonucleoside 5'-triphosphate = RNA(n+1) + diphosphate. The enzyme catalyses ATP + H2O = ADP + phosphate + H(+). Its function is as follows. Required for viral RNA replication and viral RNA encapsidation. Does not have any proteolytic activity. Forms an icosahedral capsid of pseudo T=3 symmetry with capsid proteins VP0 and VP3. Together they form an icosahedral capsid composed of 60 copies of each VP0, VP1, and VP3. All the three latter proteins contain a beta-sheet structure called beta-barrel jelly roll. Functionally, forms an icosahedral capsid of pseudo T=3 symmetry with capsid proteins VP1 and VP3. Together they form an icosahedral capsid composed of 60 copies of each VP0, VP1, and VP3. All the three latter proteins contain a beta-sheet structure called beta-barrel jelly roll. In terms of biological role, forms an icosahedral capsid of pseudo T=3 symmetry with capsid proteins VP0 and VP1. Together they form an icosahedral capsid composed of 60 copies of each VP0, VP1, and VP3. All the three latter proteins contain a beta-sheet structure called beta-barrel jelly roll. Its function is as follows. Required for viral RNA replication. Does not have any proteolytic activity. Affects membrane integrity and causes an increase in membrane permeability. Functionally, induces and associates with structural rearrangements of intracellular membranes. Displays RNA-binding, nucleotide binding and NTPase activities. May play a role in virion morphogenesis and viral RNA encapsidation by interacting with the capsid protein VP3. In terms of biological role, serves as membrane anchor via its hydrophobic domain. Plays an essential role in viral RNA replication by recruiting PI4KB at the viral replication sites, thereby allowing the formation of rearranged membranous structures where viral replication takes place. Its function is as follows. Forms a primer, VPg-pU, which is utilized by the polymerase for the initiation of RNA chains. Cysteine protease that generates mature viral proteins from the precursor polyprotein. In addition to its proteolytic activity, it binds to viral RNA, and thus influences viral genome replication. RNA and substrate cooperatively bind to the protease. Functionally, replicates the genomic and antigenomic RNAs by recognizing replications specific signals. Performs VPg uridylylation. This chain is Genome polyprotein, found in Salivirus A (isolate Human/Nigeria/NG-J1/2007) (SV-A).